A 364-amino-acid polypeptide reads, in one-letter code: Dermonecrotic toxin SPH (364 aa).

Positions 1–17 are cleaved as a signal peptide; sequence MIRIFALITALAITVKC. The Nucleophile role is filled by His-29. Mg(2+) is bound by residues Glu-49 and Asp-51. The active site involves His-65. Cystine bridges form between Cys-69–Cys-75 and Cys-71–Cys-215. A Mg(2+)-binding site is contributed by Asp-109.

This sequence belongs to the arthropod phospholipase D family. Mg(2+) serves as cofactor. In terms of tissue distribution, expressed in salivary glands.

The protein resides in the secreted. It catalyses the reaction an N-(acyl)-sphingosylphosphocholine = an N-(acyl)-sphingosyl-1,3-cyclic phosphate + choline. The enzyme catalyses an N-(acyl)-sphingosylphosphoethanolamine = an N-(acyl)-sphingosyl-1,3-cyclic phosphate + ethanolamine. It carries out the reaction a 1-acyl-sn-glycero-3-phosphocholine = a 1-acyl-sn-glycero-2,3-cyclic phosphate + choline. The catalysed reaction is a 1-acyl-sn-glycero-3-phosphoethanolamine = a 1-acyl-sn-glycero-2,3-cyclic phosphate + ethanolamine. Functionally, dermonecrotic toxins cleave the phosphodiester linkage between the phosphate and headgroup of certain phospholipids (sphingolipid and lysolipid substrates), forming an alcohol (often choline) and a cyclic phosphate. Acts on sphingomyelin (SM). It may also act on ceramide phosphoethanolamine (CPE), lysophosphatidylcholine (LPC) and lysophosphatidylethanolamine (LPE), but not on lysophosphatidylserine (LPS), and lysophosphatidylglycerol (LPG). It acts by transphosphatidylation, releasing exclusively cyclic phosphate products as second products. Induces dermonecrosis, hemolysis, increased vascular permeability, edema, inflammatory response, and platelet aggregation. The polypeptide is Dermonecrotic toxin SPH (SPH) (Ixodes scapularis (Black-legged tick)).